The sequence spans 260 residues: 3'-5' ssDNA/RNA exonuclease TatD (260 aa).

3 residues coordinate a divalent metal cation: glutamate 91, histidine 127, and histidine 152.

The protein belongs to the metallo-dependent hydrolases superfamily. TatD-type hydrolase family. TatD subfamily. As to quaternary structure, monomer. Mg(2+) is required as a cofactor.

It localises to the cytoplasm. 3'-5' exonuclease that prefers single-stranded DNA and RNA. May play a role in the H(2)O(2)-induced DNA damage repair. In Escherichia fergusonii (strain ATCC 35469 / DSM 13698 / CCUG 18766 / IAM 14443 / JCM 21226 / LMG 7866 / NBRC 102419 / NCTC 12128 / CDC 0568-73), this protein is 3'-5' ssDNA/RNA exonuclease TatD.